Here is a 178-residue protein sequence, read N- to C-terminus: uncharacterized protein (178 aa).

The protein resides in the mitochondrion. This is an uncharacterized protein from Paramecium tetraurelia.